A 2615-amino-acid chain; its full sequence is Polycystin-1-like protein 1 (2615 aa).

The Extracellular portion of the chain corresponds to 1–1524 (MDVDEDQHAV…VSSISEFQSH (1524 aa)). The tract at residues 17–93 (IQANPELCVS…GTNSFSNPPP (77 aa)) is disordered. N-linked (GlcNAc...) asparagine glycans are attached at residues Asn224, Asn297, Asn306, Asn390, Asn440, Asn534, and Asn619. PKD domains are found at residues 291–373 (SVSV…VQKR) and 375–456 (MANR…VREP). The REJ domain occupies 457-1349 (CQPPPVKNMG…GEEDYLHKRN (893 aa)). The interval 749–815 (SSKSDLPSNL…GEPMEEYSSL (67 aa)) is disordered. Residues 778–789 (ALSNLGSISAES) show a composition bias toward polar residues. A GAIN-B domain is found at 1364 to 1512 (RFTGLSENSQ…SVLRRKLNAT (149 aa)). Asn1458 is a glycosylation site (N-linked (GlcNAc...) asparagine). Cys1468 and Cys1494 are joined by a disulfide. The tract at residues 1468 to 1512 (CVFWDKTEWRSEGPYPQPGSSPEKVNCSYHHLAPVSVLRRKLNAT) is GPS. Asn1510 carries N-linked (GlcNAc...) asparagine glycosylation. Residues 1525–1545 (PHNLLPGIFSAFLLVLYGILV) traverse the membrane as a helical segment. At 1546–1732 (SKSRYVDCHE…PPSRSYLHTQ (187 aa)) the chain is on the cytoplasmic side. A PLAT domain is found at 1573–1690 (QLYAVVIDTG…LGGHVLREFF (118 aa)). A helical membrane pass occupies residues 1733-1753 (RLAVSFCLLCVYSCLTALVTV). The Extracellular segment spans residues 1754–1772 (RDHQQRPLDVGPTAITLEP). Residues 1773-1793 (FCMALLCTLLACPVAQLLSLL) traverse the membrane as a helical segment. The Cytoplasmic segment spans residues 1794–1905 (FRCSKEARGD…ELGSQKSRVC (112 aa)). Positions 1807–1840 (STQWPLRGVKTETPQGHDSSGRPDSRQPSPHPTS) are disordered. A helical membrane pass occupies residues 1906–1926 (LLWSSSVAWAISGSASLACGL). At 1927 to 1950 (GTGFLGYWFVPAQCMWWLYLLLLS) the chain is on the extracellular side. The chain crosses the membrane as a helical span at residues 1951–1971 (LVCCAFITQPLMICLAALVFA). Residues 1972–2057 (WKRKHDSKFF…ERLRRESIMQ (86 aa)) lie on the Cytoplasmic side of the membrane. A helical membrane pass occupies residues 2058–2078 (AALRDMTTHSIMLLLLLFIAY). Residues 2079-2288 (GRFCPGEISL…IFYSDSALKY (210 aa)) are Extracellular-facing. Residues 2289-2309 (LLMLSELLFLVLNVIHLCFQL) traverse the membrane as a helical segment. The Cytoplasmic portion of the chain corresponds to 2310 to 2332 (WGMTTKGILSYWRKPRHWLELSM). Residues 2333-2353 (VGVAIAYYAASGHLTTLAVNI) traverse the membrane as a helical segment. The Extracellular segment spans residues 2354 to 2379 (TDQFHKGLYQRLVDIGLMVSWHQRAR). Residues 2380-2400 (CLQGILLFLWMLKYVHLLSSL) traverse the membrane as a helical segment. Topologically, residues 2401-2405 (STMTP) are cytoplasmic. A helical transmembrane segment spans residues 2406-2426 (FSAVTCFPLFRVLLVGALLLA). Residues 2427–2483 (AHYHSRWFLLFTGTLSHGTSAEAFPGLLLQFPGRSKKDSWHNCLKSDHGVMRCYYGT) lie on the Extracellular side of the membrane. The chain crosses the membrane as a helical span at residues 2484–2504 (LFLLLATLGFRMLRATFLTVF). Over 2505-2615 (QNRKSSHRKP…VSGPLAAESE (111 aa)) the chain is Cytoplasmic. The segment at 2589–2615 (RAGDSPPVGSSEYQATGVSGPLAAESE) is disordered.

Belongs to the polycystin family. Heterodimer. Interacts with PKD2 to form a calcium channel. Interacts with PKD2L1; to form ciliary calcium channel. May interact with GNA12, GNAS, GNAI1 and GNAI2. In terms of tissue distribution, in testis, strong expression in Leydig cells, low level in seminal ducts, myoid cells and tunica vaginalis. Other tissues, including adrenal gland and heart myocardium, also show low expression. In embryo, highly expressed in the node.

It localises to the cell projection. It is found in the cilium membrane. Functionally, component of a calcium-permeant ion channel formed by PKD1L2 and PKD1L1 in primary cilia, where it controls cilium calcium concentration, without affecting cytoplasmic calcium concentration, and regulates sonic hedgehog/SHH signaling and GLI2 transcription. The PKD1L1:PKD2L1 channel complex is mechanosensitive only at high pressures and is highly temperature sensitive. Also involved in left/right axis specification downstream of nodal flow by forming a complex with PKD2 in cilia to facilitate flow detection in left/right patterning. May function as a G-protein-coupled receptor. The sequence is that of Polycystin-1-like protein 1 from Mus musculus (Mouse).